Reading from the N-terminus, the 354-residue chain is Uroporphyrinogen decarboxylase (354 aa).

Substrate contacts are provided by residues 28–32 (RQAGR), D78, Y155, S210, and H325.

This sequence belongs to the uroporphyrinogen decarboxylase family. Homodimer.

The protein resides in the cytoplasm. The enzyme catalyses uroporphyrinogen III + 4 H(+) = coproporphyrinogen III + 4 CO2. Its pathway is porphyrin-containing compound metabolism; protoporphyrin-IX biosynthesis; coproporphyrinogen-III from 5-aminolevulinate: step 4/4. Functionally, catalyzes the decarboxylation of four acetate groups of uroporphyrinogen-III to yield coproporphyrinogen-III. The protein is Uroporphyrinogen decarboxylase of Crocosphaera subtropica (strain ATCC 51142 / BH68) (Cyanothece sp. (strain ATCC 51142)).